Reading from the N-terminus, the 289-residue chain is SAGA-associated factor 29kDa (289 aa).

Residues 9-36 (AQQIQDRLKDIQQNIHNVDEERRRAENS) adopt a coiled-coil conformation. An SGF29 C-terminal domain is found at 137 to 278 (GNYVAKVGDN…VIAYRPTKKG (142 aa)). 2 histone H3K4me3 N-terminus binding regions span residues 179–181 (DID) and 225–228 (QTTC). Positions 249–251 (FED) are histone H3K4me3 binding.

It belongs to the SGF29 family. In terms of assembly, component of the Spt-Ada-Gcn5 acetyltransferase (SAGA) complex consisting of wda/Taf5L, Saf6, Taf9, Taf10b, Taf12, Ada1, Spt3, Spt7, Spt20, Sf3b3, Sf3b5, Nipped-A/Tra1, a histone acetyltransferase (HAT) module made up of Gcn5, Ada2b (Isoform B), Ada3 and Sgf29, and a deubiquitinase (DUB) module made up of not/nonstop, Sgf11, Atxn7 and e(y)2. Component of the Chiffon histone acetyltransferase (CHAT) complex consisting of Ada3, Sgf29, Gcn5, chif/chiffon and Ada2b (Isoform A).

Its subcellular location is the nucleus. Its function is as follows. Component of both the SAGA and CHAT histone acetyltransferase complexes, which both predominantly acetylate histone H3. The polypeptide is SAGA-associated factor 29kDa (Drosophila melanogaster (Fruit fly)).